A 342-amino-acid chain; its full sequence is Anthranilate phosphoribosyltransferase (342 aa).

Residues Gly-79, 82–83 (GD), Thr-87, 89–92 (NVST), 107–115 (KHGNRSVSS), and Ser-119 each bind 5-phospho-alpha-D-ribose 1-diphosphate. Position 79 (Gly-79) interacts with anthranilate. Ser-91 serves as a coordination point for Mg(2+). Position 110 (Asn-110) interacts with anthranilate. Arg-165 lines the anthranilate pocket. Mg(2+) contacts are provided by Asp-223 and Glu-224.

This sequence belongs to the anthranilate phosphoribosyltransferase family. As to quaternary structure, homodimer. It depends on Mg(2+) as a cofactor.

It catalyses the reaction N-(5-phospho-beta-D-ribosyl)anthranilate + diphosphate = 5-phospho-alpha-D-ribose 1-diphosphate + anthranilate. It functions in the pathway amino-acid biosynthesis; L-tryptophan biosynthesis; L-tryptophan from chorismate: step 2/5. Its function is as follows. Catalyzes the transfer of the phosphoribosyl group of 5-phosphorylribose-1-pyrophosphate (PRPP) to anthranilate to yield N-(5'-phosphoribosyl)-anthranilate (PRA). In Aeromonas hydrophila subsp. hydrophila (strain ATCC 7966 / DSM 30187 / BCRC 13018 / CCUG 14551 / JCM 1027 / KCTC 2358 / NCIMB 9240 / NCTC 8049), this protein is Anthranilate phosphoribosyltransferase.